The primary structure comprises 357 residues: Probable glutamine amidotransferase DUG3 (357 aa).

The active-site For GATase activity is cysteine 2. The 259-residue stretch at 2-260 folds into the Glutamine amidotransferase type-2 domain; that stretch reads CRFLIFKGKQ…PGEYRVERLD (259 aa).

Belongs to the DUG3 family. In terms of assembly, component of the GSH degradosomal complex composed of at least DUG1, DUG2 and DUG3.

Its subcellular location is the cytoplasm. Its function is as follows. Component of the GSH degradosomal complex involved in the degradation of glutathione (GSH) and other peptides containing a gamma-glu-X bond. In Saccharomyces cerevisiae (strain ATCC 204508 / S288c) (Baker's yeast), this protein is Probable glutamine amidotransferase DUG3 (DUG3).